Here is a 396-residue protein sequence, read N- to C-terminus: S-adenosylmethionine synthase (396 aa).

H14 is an ATP binding site. D16 serves as a coordination point for Mg(2+). E42 lines the K(+) pocket. L-methionine is bound by residues E55 and Q98. The tract at residues 98-108 (QSPDIAQGVHG) is flexible loop. ATP contacts are provided by residues 167 to 169 (DAK), 234 to 235 (RF), D243, 249 to 250 (RK), S266, and K270. L-methionine is bound at residue D243. K274 provides a ligand contact to L-methionine.

It belongs to the AdoMet synthase family. In terms of assembly, homotetramer; dimer of dimers. Mg(2+) is required as a cofactor. Requires K(+) as cofactor.

It localises to the cytoplasm. The enzyme catalyses L-methionine + ATP + H2O = S-adenosyl-L-methionine + phosphate + diphosphate. The protein operates within amino-acid biosynthesis; S-adenosyl-L-methionine biosynthesis; S-adenosyl-L-methionine from L-methionine: step 1/1. Its function is as follows. Catalyzes the formation of S-adenosylmethionine (AdoMet) from methionine and ATP. The overall synthetic reaction is composed of two sequential steps, AdoMet formation and the subsequent tripolyphosphate hydrolysis which occurs prior to release of AdoMet from the enzyme. This Treponema pallidum (strain Nichols) protein is S-adenosylmethionine synthase.